We begin with the raw amino-acid sequence, 369 residues long: Cellular tumor antigen p53 (369 aa).

Positions 1 to 28 are transcription activation (acidic); that stretch reads MAESQEFAELWERNLISTQEAGTCWELI. Residues 66 to 256 mediate DNA binding; it reads DYPGEHGFKL…KTEESNFRKD (191 aa). C140, H143, C202, and C206 together coordinate Zn(2+). Residues 237–244 form an interaction with DNA region; sequence RVCACPGR. A compositionally biased stretch (basic and acidic residues) spans 246–263; it reads RKTEESNFRKDQETKTLD. 2 disordered regions span residues 246–296 and 318–369; these read RKTE…SGSS and NDSL…SDSD. The segment covering 269-281 has biased composition (polar residues); it reads NKRSLTKDSTSSV. The Bipartite nuclear localization signal motif lies at 270–289; sequence KRSLTKDSTSSVPRPEGSKK. Positions 298-329 are oligomerization; it reads EEIYTLQVRGKERYEMLKKINDSLELSDVVPP. The short motif at 312–323 is the Nuclear export signal element; that stretch reads EMLKKINDSLEL. The basic (repression of DNA-binding) stretch occupies residues 342 to 365; the sequence is KGKKKDGQTPEPKRGKKLMVKDEK. Positions 346-369 are enriched in basic and acidic residues; it reads KDGQTPEPKRGKKLMVKDEKSDSD.

Belongs to the p53 family. As to quaternary structure, binds DNA as a homotetramer. Zn(2+) is required as a cofactor.

The protein localises to the cytoplasm. The protein resides in the nucleus. In terms of biological role, multifunctional transcription factor that induces cell cycle arrest, DNA repair or apoptosis upon binding to its target DNA sequence. Acts as a tumor suppressor in many tumor types; induces growth arrest or apoptosis depending on the physiological circumstances and cell type. Negatively regulates cell division by controlling expression of a set of genes required for this process. One of the activated genes is an inhibitor of cyclin-dependent kinases. Apoptosis induction seems to be mediated either by stimulation of BAX and FAS antigen expression, or by repression of Bcl-2 expression. The sequence is that of Cellular tumor antigen p53 (tp53) from Barbus barbus (Barbel).